The sequence spans 252 residues: Large ribosomal subunit protein uL4 (252 aa).

It belongs to the universal ribosomal protein uL4 family. Part of the 50S ribosomal subunit.

One of the primary rRNA binding proteins, this protein initially binds near the 5'-end of the 23S rRNA. It is important during the early stages of 50S assembly. It makes multiple contacts with different domains of the 23S rRNA in the assembled 50S subunit and ribosome. Functionally, forms part of the polypeptide exit tunnel. The polypeptide is Large ribosomal subunit protein uL4 (Methanocaldococcus jannaschii (strain ATCC 43067 / DSM 2661 / JAL-1 / JCM 10045 / NBRC 100440) (Methanococcus jannaschii)).